The chain runs to 278 residues: Putative non-heme haloperoxidase (278 aa).

An AB hydrolase-1 domain is found at 24 to 240; the sequence is PLVFLHGLSV…STAKITNASF (217 aa). Residues Ser97 and Asp221 contribute to the active site.

It belongs to the AB hydrolase superfamily.

The chain is Putative non-heme haloperoxidase (59.2) from Mycobacterium (Mycobacteriophage D29).